The following is a 469-amino-acid chain: MVVLAVLLPVVFGALLLLGLPRALGVLGAGLSFLLNLYLFLTHPGGVAHAFQAPLLPGAGVYWAFGLDGLSALFFLTIALTVFLGALVARVEGRFLGLALLMEGLLLGLFAARDLLVFYVFFEAALIPALLMLYLYGGEGRTRALYTFVLFTLVGSLPMLAAVLGARLLSGSPTFLLEDLLAHPLQEEAAFWVFLGFALAFAIKTPLFPLHAWLPPFHQENHPSGLADALGTLYKVGVFAFFRFAIPLAPEGFAQAQGLLLFLAALSALYGAWVAFAAKDFKTLLAYAGLSHMGVAALGVFSGTPEGAMGGLYLLAASGVYTGGLFLLAGRLYERTGTLEIGRYRGLAQSAPGLAALALILFLAMVGLPGLSGFPGEFLTLLGAYKASPWLAALAFLSVIASAAYALTAFQKTFWEEGGSGVKDLAGAEWGFALLSVLALLLMGVFPGYFARGLHPLAEAFAKLLGGGA.

14 helical membrane-spanning segments follow: residues 1 to 21 (MVVL…LGLP), 23 to 43 (ALGV…FLTH), 47 to 67 (VAHA…AFGL), 69 to 89 (GLSA…ALVA), 91 to 111 (VEGR…GLFA), 115 to 135 (LLVF…MLYL), 144 to 164 (ALYT…AAVL), 190 to 210 (AFWV…LFPL), 258 to 278 (GLLL…AFAA), 284 to 304 (LLAY…FSGT), 308 to 328 (AMGG…LFLL), 354 to 374 (LAAL…LSGF), 390 to 410 (WLAA…LTAF), and 430 to 450 (WGFA…PGYF).

This sequence belongs to the complex I subunit 4 family. NDH-1 is composed of 15 different subunits, Nqo1 to Nqo15. The complex has a L-shaped structure, with the hydrophobic arm (subunits Nqo7, Nqo8 and Nqo10 to Nqo14) embedded in the membrane and the hydrophilic peripheral arm (subunits Nqo1 to Nqo6, Nqo9 and Nqo15) protruding into the bacterial cytoplasm. The hydrophilic domain contains all the redox centers.

It localises to the cell inner membrane. The catalysed reaction is a quinone + NADH + 5 H(+)(in) = a quinol + NAD(+) + 4 H(+)(out). NDH-1 shuttles electrons from NADH, via FMN and iron-sulfur (Fe-S) centers, to quinones in the respiratory chain. The immediate electron acceptor for the enzyme in this species is menaquinone. Couples the redox reaction to proton translocation (for every two electrons transferred, four hydrogen ions are translocated across the cytoplasmic membrane), and thus conserves the redox energy in a proton gradient required for the synthesis of ATP. This is NADH-quinone oxidoreductase subunit 13 (nqo13) from Thermus thermophilus (strain ATCC 27634 / DSM 579 / HB8).